Consider the following 158-residue polypeptide: Snaclec stejaggregin-A subunit alpha (158 aa).

The signal sequence occupies residues 1–23 (MGRFISVSFGLLVVFLSLSGTGA). Disulfide bonds link Cys27–Cys38, Cys55–Cys152, and Cys127–Cys144. In terms of domain architecture, C-type lectin spans 34 to 153 (YDWYCYKPFN…CQAKNPFVCK (120 aa)).

The protein belongs to the snaclec family. As to quaternary structure, heteromultimer; disulfide-linked. In terms of tissue distribution, expressed by the venom gland.

The protein localises to the secreted. Its function is as follows. Interferes with one step of hemostasis (modulation of platelet aggregation, or coagulation cascade, for example). This chain is Snaclec stejaggregin-A subunit alpha, found in Trimeresurus stejnegeri (Chinese green tree viper).